Consider the following 380-residue polypeptide: Cytochrome b (380 aa).

A run of 4 helical transmembrane segments spans residues 33–53 (FGSL…FLAM), 77–98 (WLIR…YMHI), 113–133 (WNIG…GYVL), and 178–198 (FFAF…IHLL). Positions 83 and 97 each coordinate heme b. 2 residues coordinate heme b: His-182 and His-196. His-201 contacts a ubiquinone. The next 4 helical transmembrane spans lie at 226–246 (YKDL…ALFS), 288–308 (LGGV…PLLH), 320–340 (ITQF…WIGG), and 347–367 (FIII…VLFP).

This sequence belongs to the cytochrome b family. As to quaternary structure, the cytochrome bc1 complex contains 3 respiratory subunits (MT-CYB, CYC1 and UQCRFS1), 2 core proteins (UQCRC1 and UQCRC2) and probably 6 low-molecular weight proteins. The cofactor is heme b.

It localises to the mitochondrion inner membrane. In terms of biological role, component of the ubiquinol-cytochrome c reductase complex (complex III or cytochrome b-c1 complex) that is part of the mitochondrial respiratory chain. The b-c1 complex mediates electron transfer from ubiquinol to cytochrome c. Contributes to the generation of a proton gradient across the mitochondrial membrane that is then used for ATP synthesis. The sequence is that of Cytochrome b (mt-cyb) from Carassius auratus (Goldfish).